Consider the following 134-residue polypeptide: Large ribosomal subunit protein bL17 (134 aa).

It belongs to the bacterial ribosomal protein bL17 family. Part of the 50S ribosomal subunit. Contacts protein L32.

The chain is Large ribosomal subunit protein bL17 from Anaplasma marginale (strain Florida).